Consider the following 305-residue polypeptide: Porphobilinogen deaminase (305 aa).

S-(dipyrrolylmethanemethyl)cysteine is present on C240.

This sequence belongs to the HMBS family. As to quaternary structure, monomer. Dipyrromethane is required as a cofactor.

It catalyses the reaction 4 porphobilinogen + H2O = hydroxymethylbilane + 4 NH4(+). It participates in porphyrin-containing compound metabolism; protoporphyrin-IX biosynthesis; coproporphyrinogen-III from 5-aminolevulinate: step 2/4. Its function is as follows. Tetrapolymerization of the monopyrrole PBG into the hydroxymethylbilane pre-uroporphyrinogen in several discrete steps. The polypeptide is Porphobilinogen deaminase (Xylella fastidiosa (strain M23)).